Reading from the N-terminus, the 157-residue chain is Ribosome maturation factor RimP (157 aa).

The protein belongs to the RimP family.

It localises to the cytoplasm. Functionally, required for maturation of 30S ribosomal subunits. The chain is Ribosome maturation factor RimP from Synechococcus sp. (strain JA-3-3Ab) (Cyanobacteria bacterium Yellowstone A-Prime).